Consider the following 186-residue polypeptide: Acetyltransferase PA5475 (186 aa).

The 156-residue stretch at 31–186 (VLIRPLREED…STQVIHRLAL (156 aa)) folds into the N-acetyltransferase domain. CoA-binding positions include 117 to 119 (VTI), Gly-125, Asn-156, and 161 to 163 (DLC).

Functionally, catalyzes the transfer of an acetyl group from acetyl coenzyme A (AcCoA) to an acceptor substrate and releases both CoA and the acetylated product. It prefers the antibiotic chloramphenicol. This is Acetyltransferase PA5475 from Pseudomonas aeruginosa (strain ATCC 15692 / DSM 22644 / CIP 104116 / JCM 14847 / LMG 12228 / 1C / PRS 101 / PAO1).